A 259-amino-acid chain; its full sequence is MSSPNWLKDLTGAWLFYTVFPKLTRINPRFERIARFSPLIGVLIGVLQVSVLILLLQLQWPNESMPFIAIALGLWITGGIHVDGLMDTADGIAAGPSRCIEAMKDSRIGASGIIALTINLLLQIAALFKLRLLILFAIPIASFWGRYSQIWAISHYPYLNKEGSSKFLHKKNWRGFLIESIPSYAFLSFLIFILINIDISIISTPNLIIGIIVGFLPALIIPHLLARRLGGHSGDSYGASVVLVETCMLIIFSIILPAS.

Transmembrane regions (helical) follow at residues 36–56 (FSPL…ILLL), 65–85 (MPFI…VDGL), 108–128 (IGAS…AALF), 133–153 (LILF…IWAI), 175–195 (GFLI…FILI), 201–221 (IIST…ALII), and 238–258 (GASV…ILPA).

It belongs to the CobS family. The cofactor is Mg(2+).

It localises to the cell inner membrane. It carries out the reaction alpha-ribazole + adenosylcob(III)inamide-GDP = adenosylcob(III)alamin + GMP + H(+). The enzyme catalyses alpha-ribazole 5'-phosphate + adenosylcob(III)inamide-GDP = adenosylcob(III)alamin 5'-phosphate + GMP + H(+). Its pathway is cofactor biosynthesis; adenosylcobalamin biosynthesis; adenosylcobalamin from cob(II)yrinate a,c-diamide: step 7/7. Joins adenosylcobinamide-GDP and alpha-ribazole to generate adenosylcobalamin (Ado-cobalamin). Also synthesizes adenosylcobalamin 5'-phosphate from adenosylcobinamide-GDP and alpha-ribazole 5'-phosphate. The polypeptide is Adenosylcobinamide-GDP ribazoletransferase (Prochlorococcus marinus (strain SARG / CCMP1375 / SS120)).